We begin with the raw amino-acid sequence, 401 residues long: Homocitrate synthase (401 aa).

Residues 22 to 271 (VRFCDTTLRD…KLPIDLDTTS (250 aa)) form the Pyruvate carboxyltransferase domain. The interval 367 to 401 (TRHKRGLDSRDLPGTSRAGRDAGPRAGTPTREEPV) is disordered.

This sequence belongs to the alpha-IPM synthase/homocitrate synthase family.

It catalyses the reaction acetyl-CoA + 2-oxoglutarate + H2O = (2R)-homocitrate + CoA + H(+). Its function is as follows. This protein is a Fe-Mo-cofactor biosynthetic component. The polypeptide is Homocitrate synthase (nifV) (Frankia sp. (strain FaC1)).